A 176-amino-acid chain; its full sequence is Shikimate kinase (176 aa).

14-19 provides a ligand contact to ATP; sequence GAGKSS. Residue S18 coordinates Mg(2+). The substrate site is built by D36, R60, and G82. R120 contributes to the ATP binding site. R138 is a substrate binding site.

Belongs to the shikimate kinase family. As to quaternary structure, monomer. Mg(2+) serves as cofactor.

Its subcellular location is the cytoplasm. It catalyses the reaction shikimate + ATP = 3-phosphoshikimate + ADP + H(+). The protein operates within metabolic intermediate biosynthesis; chorismate biosynthesis; chorismate from D-erythrose 4-phosphate and phosphoenolpyruvate: step 5/7. Catalyzes the specific phosphorylation of the 3-hydroxyl group of shikimic acid using ATP as a cosubstrate. The polypeptide is Shikimate kinase (Dehalococcoides mccartyi (strain ATCC BAA-2266 / KCTC 15142 / 195) (Dehalococcoides ethenogenes (strain 195))).